Reading from the N-terminus, the 323-residue chain is V-type ATP synthase subunit C (323 aa).

This sequence belongs to the V-ATPase V0D/AC39 subunit family.

Produces ATP from ADP in the presence of a proton gradient across the membrane. This is V-type ATP synthase subunit C (atpC) from Thermus thermophilus (strain ATCC 27634 / DSM 579 / HB8).